Consider the following 330-residue polypeptide: Phosphate acyltransferase (330 aa).

Belongs to the PlsX family. As to quaternary structure, homodimer. Probably interacts with PlsY.

The protein localises to the cytoplasm. It carries out the reaction a fatty acyl-[ACP] + phosphate = an acyl phosphate + holo-[ACP]. The protein operates within lipid metabolism; phospholipid metabolism. Catalyzes the reversible formation of acyl-phosphate (acyl-PO(4)) from acyl-[acyl-carrier-protein] (acyl-ACP). This enzyme utilizes acyl-ACP as fatty acyl donor, but not acyl-CoA. This is Phosphate acyltransferase from Bacillus cytotoxicus (strain DSM 22905 / CIP 110041 / 391-98 / NVH 391-98).